Reading from the N-terminus, the 282-residue chain is NADPH-dependent 7-cyano-7-deazaguanine reductase (282 aa).

Residue 88-90 (IES) coordinates substrate. 90-91 (SK) provides a ligand contact to NADPH. The active-site Thioimide intermediate is C190. D197 functions as the Proton donor in the catalytic mechanism. Position 229 to 230 (229 to 230 (HE)) interacts with substrate. 258–259 (RG) is a binding site for NADPH.

It belongs to the GTP cyclohydrolase I family. QueF type 2 subfamily. In terms of assembly, homodimer.

The protein resides in the cytoplasm. It carries out the reaction 7-aminomethyl-7-carbaguanine + 2 NADP(+) = 7-cyano-7-deazaguanine + 2 NADPH + 3 H(+). It functions in the pathway tRNA modification; tRNA-queuosine biosynthesis. Catalyzes the NADPH-dependent reduction of 7-cyano-7-deazaguanine (preQ0) to 7-aminomethyl-7-deazaguanine (preQ1). The polypeptide is NADPH-dependent 7-cyano-7-deazaguanine reductase (Shigella flexneri serotype 5b (strain 8401)).